The primary structure comprises 118 residues: DNA-binding protein YG5714_1868 (118 aa).

This sequence belongs to the PDCD5 family.

The sequence is that of DNA-binding protein YG5714_1868 from Saccharolobus islandicus (strain Y.G.57.14 / Yellowstone #1) (Sulfolobus islandicus).